We begin with the raw amino-acid sequence, 184 residues long: Succinate dehydrogenase cytochrome b560 subunit, mitochondrial (184 aa).

A helical transmembrane segment spans residues 65-94; it reads LTWMLSGFHRISGCVMAGTLLVGGLGFAVL. At 95–114 the chain is on the mitochondrial intermembrane side; it reads PLDFTTFVEYIRGWNLPCAV. Residues 115-139 traverse the membrane as a helical segment; sequence TAVFKYIIAFPIIFHTLNGIRFLGF. Histidine 129 is a binding site for heme. Over 140–147 the chain is Mitochondrial matrix; that stretch reads DLAKGVDN. Residues 148-169 traverse the membrane as a helical segment; the sequence is IGQVYKSGWLVFGVSAVIALAI. The Mitochondrial intermembrane portion of the chain corresponds to 170–172; sequence VIN.

It belongs to the cytochrome b560 family. As to quaternary structure, component of complex II composed of four subunits: a flavoprotein (FP), iron-sulfur protein (IP), and a cytochrome b560 composed of two transmembrane proteins. Heme is required as a cofactor.

Its subcellular location is the mitochondrion inner membrane. The protein operates within carbohydrate metabolism; tricarboxylic acid cycle. In terms of biological role, membrane-anchoring subunit of succinate dehydrogenase (SDH) that is involved in complex II of the mitochondrial electron transport chain and is responsible for transferring electrons from succinate to ubiquinone (coenzyme Q). Mediates resistance to enteropathogenic E.coli infection. The chain is Succinate dehydrogenase cytochrome b560 subunit, mitochondrial (mev-1) from Caenorhabditis briggsae.